The primary structure comprises 191 residues: Large ribosomal subunit protein bL9 (191 aa).

Residues 149-191 (EEAERQSKGESLTSADAIYGVDEDALRPEDFFDPEADGNEDDE) form a disordered region. Positions 179–191 (FFDPEADGNEDDE) are enriched in acidic residues.

It belongs to the bacterial ribosomal protein bL9 family.

Binds to the 23S rRNA. The chain is Large ribosomal subunit protein bL9 (rplI) from Agrobacterium fabrum (strain C58 / ATCC 33970) (Agrobacterium tumefaciens (strain C58)).